The following is a 60-amino-acid chain: Large ribosomal subunit protein bL32 (60 aa).

The segment covering 1 to 16 has biased composition (basic residues); sequence MAVPRNRHSNARKNIR. Residues 1-20 form a disordered region; that stretch reads MAVPRNRHSNARKNIRRSHD.

The protein belongs to the bacterial ribosomal protein bL32 family.

The sequence is that of Large ribosomal subunit protein bL32 (rpmF) from Chlamydia pneumoniae (Chlamydophila pneumoniae).